We begin with the raw amino-acid sequence, 574 residues long: Serine/threonine-protein kinase B (574 aa).

Residues 34–301 (YQTLGLLGKG…VLDALEMPTY (268 aa)) enclose the Protein kinase domain. ATP contacts are provided by residues 40-48 (LGKGGFGAT) and Lys65. Asp163 (proton acceptor) is an active-site residue. A disordered region spans residues 319 to 407 (GAGDEPATGI…GGSVGAGGID (89 aa)). Polar residues predominate over residues 343-364 (TRFNTNVQPRDPSSTSLNTGIK). Pentapeptide repeat domains are found at residues 454-493 (QNLVGIVLAKAFVPGINCYQANLTNANFEQAELTRADFGK) and 504-543 (ANLSDAYFGYADLRGADLRGANLNGVNFKYANLQGANFSG).

The protein belongs to the protein kinase superfamily. Ser/Thr protein kinase family. Autophosphorylated.

The enzyme catalyses L-seryl-[protein] + ATP = O-phospho-L-seryl-[protein] + ADP + H(+). It catalyses the reaction L-threonyl-[protein] + ATP = O-phospho-L-threonyl-[protein] + ADP + H(+). In terms of biological role, protein kinase required for cell motility, but not for phototaxis. The protein is Serine/threonine-protein kinase B (spkB) of Synechocystis sp. (strain ATCC 27184 / PCC 6803 / Kazusa).